The following is a 303-amino-acid chain: Acetaldehyde dehydrogenase 2 (303 aa).

Catalysis depends on C130, which acts as the Acyl-thioester intermediate. NAD(+) is bound by residues 161–169 (SVGPGTRKN) and N272.

It belongs to the acetaldehyde dehydrogenase family.

The enzyme catalyses acetaldehyde + NAD(+) + CoA = acetyl-CoA + NADH + H(+). The chain is Acetaldehyde dehydrogenase 2 from Burkholderia vietnamiensis (strain G4 / LMG 22486) (Burkholderia cepacia (strain R1808)).